A 210-amino-acid polypeptide reads, in one-letter code: High-affinity nitrate transporter 3.1 (210 aa).

The signal sequence occupies residues 1–22; that stretch reads MAIQKILFASLLICSLIQSIHG. A helical transmembrane segment spans residues 178 to 198; the sequence is LDIASICFSVFSVVALVVFFV.

Belongs to the NAR2 family. As to quaternary structure, heterotetramer composed of two NRT2.1 and two NRT3.1. Interacts with NRT2.1 and NRT2.3. Interacts with all other NRT2 transporters, including NRT2.5. As to expression, highly expressed in roots. Detected in shoots.

It is found in the cell membrane. In terms of biological role, acts as a dual component transporter with NTR2.1. Required for high-affinity nitrate transport. Acts as a repressor of lateral root initiation. May be involved in targeting NRT2 proteins to the plasma membrane. The chain is High-affinity nitrate transporter 3.1 (NRT3.1) from Arabidopsis thaliana (Mouse-ear cress).